Here is a 793-residue protein sequence, read N- to C-terminus: Pleckstrin homology domain-containing family H member 3 (793 aa).

A signal peptide spans 1–18; the sequence is MPLPGGLWWLLCCRRGFT. The tract at residues 28 to 62 is disordered; the sequence is ELSGDGDEDEDEETFELRTPSPAGGGRGPLEVTLT. Residues 29–41 show a composition bias toward acidic residues; the sequence is LSGDGDEDEDEET. A Phosphoserine modification is found at Ser-30. A PH domain is found at 95–199; the sequence is DIVVKGWLYR…WGVALREVIA (105 aa). The 163-residue stretch at 237-399 folds into the MyTH4 domain; it reads HTSGALYAPL…PSLAEISALS (163 aa). Positions 404–754 constitute an FERM domain; sequence LLCTVHCPGA…AYLANPSPER (351 aa). Disordered regions lie at residues 554-586 and 598-622; these read VPLP…SAAL and KRRA…EGGG. Residues 598-608 show a composition bias toward basic residues; that stretch reads KRRAERARRGG. Omega-N-methylarginine occurs at positions 638 and 642. The segment covering 750–762 has biased composition (low complexity); it reads PSPERPCSSSSPP. The disordered stretch occupies residues 750 to 793; that stretch reads PSPERPCSSSSPPCQDLPDTSPPSQRPGLDEPQGQSGCLGQLQD. The span at 782 to 793 shows a compositional bias: polar residues; sequence QGQSGCLGQLQD.

The protein is Pleckstrin homology domain-containing family H member 3 (PLEKHH3) of Homo sapiens (Human).